Here is a 158-residue protein sequence, read N- to C-terminus: NADH-quinone oxidoreductase subunit B (158 aa).

[4Fe-4S] cluster is bound by residues C37, C38, C102, and C132.

The protein belongs to the complex I 20 kDa subunit family. NDH-1 is composed of 14 different subunits. Subunits NuoB, C, D, E, F, and G constitute the peripheral sector of the complex. [4Fe-4S] cluster is required as a cofactor.

The protein resides in the cell inner membrane. It carries out the reaction a quinone + NADH + 5 H(+)(in) = a quinol + NAD(+) + 4 H(+)(out). In terms of biological role, NDH-1 shuttles electrons from NADH, via FMN and iron-sulfur (Fe-S) centers, to quinones in the respiratory chain. The immediate electron acceptor for the enzyme in this species is believed to be ubiquinone. Couples the redox reaction to proton translocation (for every two electrons transferred, four hydrogen ions are translocated across the cytoplasmic membrane), and thus conserves the redox energy in a proton gradient. This Thioalkalivibrio sulfidiphilus (strain HL-EbGR7) protein is NADH-quinone oxidoreductase subunit B.